A 216-amino-acid chain; its full sequence is Elongation factor Ts (216 aa).

The interval 81–84 (TDFV) is involved in Mg(2+) ion dislocation from EF-Tu.

This sequence belongs to the EF-Ts family.

The protein localises to the cytoplasm. Its function is as follows. Associates with the EF-Tu.GDP complex and induces the exchange of GDP to GTP. It remains bound to the aminoacyl-tRNA.EF-Tu.GTP complex up to the GTP hydrolysis stage on the ribosome. The polypeptide is Elongation factor Ts (Geobacter metallireducens (strain ATCC 53774 / DSM 7210 / GS-15)).